The sequence spans 270 residues: Indole-3-glycerol phosphate synthase (270 aa).

Belongs to the TrpC family.

The enzyme catalyses 1-(2-carboxyphenylamino)-1-deoxy-D-ribulose 5-phosphate + H(+) = (1S,2R)-1-C-(indol-3-yl)glycerol 3-phosphate + CO2 + H2O. The protein operates within amino-acid biosynthesis; L-tryptophan biosynthesis; L-tryptophan from chorismate: step 4/5. This Beutenbergia cavernae (strain ATCC BAA-8 / DSM 12333 / CCUG 43141 / JCM 11478 / NBRC 16432 / NCIMB 13614 / HKI 0122) protein is Indole-3-glycerol phosphate synthase.